The sequence spans 2171 residues: Voltage-dependent L-type calcium channel subunit alpha-1C (2171 aa).

The Cytoplasmic portion of the chain corresponds to 1-154; it reads MLRALVQPAT…RACISIVEWK (154 aa). Residues 77-98 form a calmodulin-binding region; the sequence is GAALSWQAAIDAARQAKLMGSA. Positions 103-128 are disordered; the sequence is ISTVSSTQRKRQQYGKPKKQGSTTAT. Residues 110–121 are compositionally biased toward basic residues; sequence QRKRQQYGKPKK. The stretch at 141–438 is one I repeat; it reads NPIRRACISI…LVLGVLSGEF (298 aa). A helical membrane pass occupies residues 155-173; the sequence is PFEIIILLTIFANCVALAI. The Extracellular segment spans residues 174 to 188; it reads YIPFPEDDSNATNSN. N-linked (GlcNAc...) asparagine glycosylation occurs at Asn183. Residues 189 to 209 form a helical membrane-spanning segment; sequence LERVEYLFLIIFTVEAFLKVI. Over 210–218 the chain is Cytoplasmic; sequence AYGLLFHPN. A helical transmembrane segment spans residues 219-239; the sequence is AYLRNGWNLLDFIIVVVGLFS. Topologically, residues 240–262 are extracellular; that stretch reads AILEQATKADGANALGGKGAGFD. Residues 263 to 281 form a helical membrane-spanning segment; sequence VKALRAFRVLRPLRLVSGV. At 282 to 298 the chain is on the cytoplasmic side; it reads PSLQVVLNSIIKAMVPL. A helical transmembrane segment spans residues 299–320; the sequence is LHIALLVLFVIIIYAIIGLELF. The Extracellular portion of the chain corresponds to 321 to 380; the sequence is MGKMHKTCYNQEGVADVPAEDDPSPCALETGHGRQCQNGTVCKPGWDGPKHGITNFDNFA. 2 disulfides stabilise this stretch: Cys328-Cys356 and Cys346-Cys362. A glycan (N-linked (GlcNAc...) asparagine) is linked at Asn358. Residues 381–402 constitute an intramembrane region (pore-forming); that stretch reads FAMLTVFQCITMEGWTDVLYWM. The Selectivity filter of repeat I signature appears at 391–394; the sequence is TMEG. Glu393 provides a ligand contact to Ca(2+). Residues 403-410 lie on the Extracellular side of the membrane; that stretch reads QDAMGYEL. The chain crosses the membrane as a helical span at residues 411 to 431; it reads PWVYFVSLVIFGSFFVLNLVL. The Cytoplasmic segment spans residues 432-554; sequence GVLSGEFSKE…RKCRAAVKSN (123 aa). The segment at 458–475 is AID/alpha-interaction domain; mediates interaction with the beta subunit; that stretch reads QQLEEDLKGYLDWITQAE. The disordered stretch occupies residues 479–511; the sequence is PENEDEGMDEEKPRNMSMPTSETESVNTENVAG. Residues 495–508 are compositionally biased toward polar residues; it reads SMPTSETESVNTEN. The residue at position 499 (Ser499) is a Phosphoserine. Thr506 carries the post-translational modification Phosphothreonine. The II repeat unit spans residues 540 to 786; it reads NRFCRRKCRA…VFLAIAVDNL (247 aa). The chain crosses the membrane as a helical span at residues 555-573; sequence VFYWLVIFLVFLNTLTIAS. The Extracellular portion of the chain corresponds to 574–584; sequence EHYNQPHWLTE. Residues 585 to 605 traverse the membrane as a helical segment; the sequence is VQDTANKALLALFTAEMLLKM. Topologically, residues 606–616 are cytoplasmic; it reads YSLGLQAYFVS. Residues 617-636 traverse the membrane as a helical segment; the sequence is LFNRFDCFIVCGGILETILV. Over 637 to 645 the chain is Extracellular; the sequence is ETKVMSPLG. Residues 646 to 664 form a helical membrane-spanning segment; sequence ISVLRCVRLLRIFKITRYW. Residues 665-683 lie on the Cytoplasmic side of the membrane; that stretch reads NSLSNLVASLLNSVRSIAS. Residues 684–703 traverse the membrane as a helical segment; it reads LLLLLFLFIIIFSLLGMQLF. The Extracellular portion of the chain corresponds to 704 to 723; the sequence is GGKFNFDEMQTRRSTFDNFP. An intramembrane region (pore-forming) is located at residues 724 to 745; the sequence is QSLLTVFQILTGEDWNSVMYDG. Positions 734–737 match the Selectivity filter of repeat II motif; sequence TGED. Residue Glu736 participates in Ca(2+) binding. The Extracellular portion of the chain corresponds to 746–755; the sequence is IMAYGGPSFP. A helical transmembrane segment spans residues 756 to 775; sequence GMLVCIYFIILFICGNYILL. At 776 to 930 the chain is on the cytoplasmic side; the sequence is NVFLAIAVDN…LQCHRIVNDT (155 aa). Residues 794–891 are disordered; it reads SAQKEEEEEK…EMPVGPRPRP (98 aa). Positions 813–836 are enriched in basic and acidic residues; the sequence is SPEKKQEVVGKPALEEAKEEKIEL. A phosphoserine mark is found at Ser838 and Ser845. Residues 859-906 are interaction with STAC2; the sequence is NESEDKSPYPNPETTGEEDEEEPEMPVGPRPRPLSELHLKEKAVPMPE. The span at 873-882 shows a compositional bias: acidic residues; the sequence is TGEEDEEEPE. The III repeat unit spans residues 917–1199; it reads NRFRLQCHRI…IFVGFVIVTF (283 aa). The helical transmembrane segment at 931-949 threads the bilayer; it reads IFTNLILFFILLSSISLAA. Over 950–961 the chain is Extracellular; the sequence is EDPVQHTSFRNH. A helical membrane pass occupies residues 962 to 981; sequence ILFYFDIVFTTIFTIEIALK. Residues 982–997 are Cytoplasmic-facing; it reads MTAYGAFLHKGSFCRN. Residues 998 to 1016 traverse the membrane as a helical segment; it reads YFNILDLLVVSVSLISFGI. Residues 1017-1023 are Extracellular-facing; that stretch reads QSSAINV. The chain crosses the membrane as a helical span at residues 1024-1042; it reads VKILRVLRVLRPLRAINRA. Residues 1043 to 1061 lie on the Cytoplasmic side of the membrane; that stretch reads KGLKHVVQCVFVAIRTIGN. A helical membrane pass occupies residues 1062–1081; it reads IVIVTTLLQFMFACIGVQLF. The Extracellular portion of the chain corresponds to 1082 to 1131; that stretch reads KGKLYTCSDSSKQTEAECKGNYITYKDGEVDHPIIQPRSWENSKFDFDNV. The cysteines at positions 1088 and 1099 are disulfide-linked. The segment at 1119–1208 is dihydropyridine binding; that stretch reads RSWENSKFDF…FQEQGEQEYK (90 aa). The pore-forming intramembrane region spans 1132 to 1152; that stretch reads LAAMMALFTVSTFEGWPELLY. Positions 1143 to 1146 match the Selectivity filter of repeat III motif; it reads TFEG. Glu1145 is a binding site for Ca(2+). Over 1153 to 1169 the chain is Extracellular; sequence RSIDSHTEDKGPIYNYR. The helical transmembrane segment at 1170-1191 threads the bilayer; that stretch reads VEISIFFIIYIIIIAFFMMNIF. Residues 1192-1249 lie on the Cytoplasmic side of the membrane; the sequence is VGFVIVTFQEQGEQEYKNCELDKNQRQCVEYALKARPLRRYIPKNQHQYKVWYVVNST. An IV repeat occupies 1236-1509; sequence NQHQYKVWYV…LFVAVIMDNF (274 aa). A helical membrane pass occupies residues 1250–1271; that stretch reads YFEYLMFVLILLNTICLAMQHY. Residues 1272–1279 are Extracellular-facing; that stretch reads GQSCLFKI. The chain crosses the membrane as a helical span at residues 1280–1301; sequence AMNILNMLFTGLFTVEMILKLI. Residues 1302 to 1311 lie on the Cytoplasmic side of the membrane; the sequence is AFKPKGYFSD. A helical transmembrane segment spans residues 1312–1331; that stretch reads PWNVFDFLIVIGSIIDVILS. The Extracellular portion of the chain corresponds to 1332–1354; the sequence is ETNPAEHTQCSPSMNAEENSRIS. A helical membrane pass occupies residues 1355-1373; sequence ITFFRLFRVMRLVKLLSRG. At 1374 to 1391 the chain is on the cytoplasmic side; it reads EGIRTLLWTFIKSFQALP. The chain crosses the membrane as a helical span at residues 1392-1412; that stretch reads YVALLIVMLFFIYAVIGMQVF. Residues 1413–1434 are Extracellular-facing; sequence GKIALNDTTEINRNNNFQTFPQ. Asn1418 carries N-linked (GlcNAc...) asparagine glycosylation. The pore-forming intramembrane region spans 1435 to 1453; that stretch reads AVLLLFRCATGEAWQDIML. Positions 1444–1447 match the Selectivity filter of repeat IV motif; that stretch reads TGEA. The Extracellular segment spans residues 1454-1481; that stretch reads ACMPGKKCAPESEPHNSTEGETPCGSSF. Residues 1460–1528 form a dihydropyridine binding region; the sequence is KCAPESEPHN…LGPHHLDEFK (69 aa). Cysteines 1461 and 1477 form a disulfide. A glycan (N-linked (GlcNAc...) asparagine) is linked at Asn1469. Positions 1474 to 1516 are phenylalkylamine binding; it reads ETPCGSSFAVFYFISFYMLCAFLIINLFVAVIMDNFDYLTRDW. Residues 1482–1506 traverse the membrane as a helical segment; sequence AVFYFISFYMLCAFLIINLFVAVIM. At 1507-2171 the chain is on the cytoplasmic side; that stretch reads DNFDYLTRDW…ADRRAGVSSL (665 aa). Residues 1641–1668 are important for interaction with STAC1, STAC2 and STAC3; that stretch reads DEVTVGKFYATFLIQEYFRKFKKRKEQG. The calmodulin-binding IQ region stretch occupies residues 1647–1667; the sequence is KFYATFLIQEYFRKFKKRKEQ. Positions 1681–1700 are important for localization in at the junctional membrane; it reads LQAGLRTLHDIGPEIRRAIS. 2 positions are modified to phosphoserine: Ser1700 and Ser1721. The tract at residues 1760-1797 is disordered; sequence ISKAGNNQGDTESPSHEKLVDSTFTPSSYSSTGSNANI. Residues 1781–1793 show a composition bias toward polar residues; that stretch reads STFTPSSYSSTGS. Ser1928 is modified (phosphoserine; by PKA). 3 disordered regions span residues 1971 to 2014, 2026 to 2060, and 2114 to 2155; these read RSHS…EKLN, SGEN…GRQF, and SGGA…PGCG. Basic and acidic residues predominate over residues 2130 to 2140; sequence NRRDPGRDRAG.

Belongs to the calcium channel alpha-1 subunit (TC 1.A.1.11) family. CACNA1C subfamily. In terms of assembly, component of a calcium channel complex consisting of a pore-forming alpha subunit (CACNA1C) and ancillary beta, gamma and delta subunits. The channel complex contains alpha, beta, gamma and delta subunits in a 1:1:1:1 ratio, i.e. it contains only one of each type of subunit. CACNA1C channel activity is modulated by ancillary subunits, such as CACNB1, CACNB2, CACNB3, CACNA2D1 and CACNA2D4. Interacts with CACNB1. Interacts with CACNB2. Identified in a complex with CACNA2D4 and CACNB3. Interacts with CACNB3. Interacts with CACNA2D1. Interacts with the gamma subunits CACNG4, CACNG6, CACNG7 and CACNG8. Interacts with CACNA2D4. Interacts with CALM1. Interacts (via the N-terminus and the C-terminal C and IQ motifs) with CABP1; this inhibits Ca(2+)-dependent channel inactivation. The binding via the C motif is calcium independent whereas the binding via IQ requires the presence of calcium and is mutually exclusive with calmodulin binding. The binding to the cytoplasmic N-terminal domain is calcium independent but is essential for the channel modulation. Interacts (via C-terminal CDB motif) with CABP5; in a calcium-dependent manner. Interacts with CIB1; the interaction increases upon cardiomyocytes hypertrophy. Interacts with STAC1, STAC2 and STAC3; this inhibits channel inactivation, probably by hindering CALM1 binding. In terms of processing, phosphorylation by PKA at Ser-1928 activates the channel. Elevated levels of blood glucose lead to increased phosphorylation by PKA. In terms of tissue distribution, expression in cardiac muscle. In lung, expressed in airway and vascular smooth muscle cells.

It localises to the cell membrane. The protein localises to the sarcolemma. Its subcellular location is the perikaryon. The protein resides in the postsynaptic density membrane. It is found in the cell projection. It localises to the dendrite. The protein localises to the T-tubule. It carries out the reaction Ca(2+)(in) = Ca(2+)(out). Inhibited by dihydropyridines (DHP), such as isradipine. Inhibited by nifedipine. Channel activity is regulated by Ca(2+) and calmodulin. Binding of STAC1, STAC2 or STAC3 to a region that overlaps with the calmodulin binding site inhibits channel inactivation by Ca(2+) and calmodulin. Binding of calmodulin or CABP1 at the same regulatory sites results in opposite effects on the channel function. Shear stress and pressure increases calcium channel activity. In terms of biological role, pore-forming, alpha-1C subunit of the voltage-gated calcium channel that gives rise to L-type calcium currents. Mediates influx of calcium ions into the cytoplasm, and thereby triggers calcium release from the sarcoplasm. Plays an important role in excitation-contraction coupling in the heart. Required for normal heart development and normal regulation of heart rhythm. Required for normal contraction of smooth muscle cells in blood vessels and in the intestine. Essential for normal blood pressure regulation via its role in the contraction of arterial smooth muscle cells. Long-lasting (L-type) calcium channels belong to the 'high-voltage activated' (HVA) group. This is Voltage-dependent L-type calcium channel subunit alpha-1C (CACNA1C) from Oryctolagus cuniculus (Rabbit).